Consider the following 377-residue polypeptide: D-alanine--D-alanine ligase (377 aa).

In terms of domain architecture, ATP-grasp spans 137 to 346; the sequence is KELMTVNGIR…RSQQAEKLIQ (210 aa). 167–222 contributes to the ATP binding site; sequence SKQLGEVVFVKAANQGSSVGVSRVTNAEEYENALRDSFQYDEKLLVEKAVESPTEL. Aspartate 300, glutamate 313, and asparagine 315 together coordinate Mg(2+).

The protein belongs to the D-alanine--D-alanine ligase family. The cofactor is Mg(2+). Mn(2+) is required as a cofactor.

The protein resides in the cytoplasm. The catalysed reaction is 2 D-alanine + ATP = D-alanyl-D-alanine + ADP + phosphate + H(+). It participates in cell wall biogenesis; peptidoglycan biosynthesis. Functionally, cell wall formation. This is D-alanine--D-alanine ligase from Oenococcus oeni (strain ATCC BAA-331 / PSU-1).